Here is a 201-residue protein sequence, read N- to C-terminus: 3-isopropylmalate dehydratase small subunit (201 aa).

It belongs to the LeuD family. LeuD type 1 subfamily. Heterodimer of LeuC and LeuD.

It carries out the reaction (2R,3S)-3-isopropylmalate = (2S)-2-isopropylmalate. It participates in amino-acid biosynthesis; L-leucine biosynthesis; L-leucine from 3-methyl-2-oxobutanoate: step 2/4. Functionally, catalyzes the isomerization between 2-isopropylmalate and 3-isopropylmalate, via the formation of 2-isopropylmaleate. This Thermus thermophilus (strain ATCC BAA-163 / DSM 7039 / HB27) protein is 3-isopropylmalate dehydratase small subunit.